The following is a 1113-amino-acid chain: MSQTLLDNLNKKELTETSCTIEIQAAFILSSLATFFGGLIVLFIFRIALKISRNWKTVKGPRGILELFSSRRIEVNPLRKLYFHGVFRERIEMLLSAQTIVGQVLVILVFVLSIGSLVIYFINSMDPVRKCSSYEDKIVHVDLSFNAFFSFYFGLRFWAAEDKIKFWLEMNSIVDIFTIPPTFISYYLKSNWLGLRFLRALRLLELPKILQILQVIKTSNSVKLSKLMSIVISTWFTAAGFLHLVENSGDPWLNGRNSQTMSYFESIYLVTATMSTVGFGDVVAKTSLGRIFIVFFTLGSLILFANYIPEMVELFSTRKKYNKPYEAVKGKKFIVVCGNITIDSVTAFLRNFLHRKAGEINIEIVFLGEAPPSVELETLLKCHTSCTTFVCGTALKFEDLKRVAVENAEACLILANPFCSDLHDEDNSNIMRVLSIKNYYPQTRVIIQMLQSQNKVFLSRIPNWNWSAGDNIICFAELKLGFIAQGCLVPGLCTFLTTLFIEQNQKVFPKHPWQKHFLNGLKNKILTQRLSNDFVGMTFPQVSRLCFLKMHLMLIAIQHKPLFHNCCSLILNPSSQVRLNKDTLGFFIAESSKDVKRALFYCSNCHSDVCNPELIGKCGCKNRSRQQLVAPTIMVMQSSLNEFAPTAEIYTSISREQTSSVTILTTRNMPVDTADDSDMLDSSGMFHWCRSMPLDKVVLKRSDKATHEFQNHIVACVFGDAHSSLMGLRNFVMPLRASNYTRQELKDIVFIGSLEYFQREWRFLRNFPKIHIMPGSALYTGDLHAVNVEQCSMCVILATPYKALSSQLLVDTETIMATLNIQALRISCPMSGSSKKEVNTSPTFSKYEGKQRYQQIPILTELKNPSNIHFIEQMDGLDEAIKGTSLHLSTAFSTGTVFSGTFLDSLLATAFYNYHVLELLQMLVTGGINSQTEHCLVKEKLYEGNEGGATFLSGRTRCKLGLLSLDETILSDIKPKKTFGQLFCGSLDNLGILCVGLYRMMDEGEHNSERKRFVITRPANECHLLPSDLVFCAIPFSITCDKSESNASIQDQDTTTNVTSMSQGSNFQGAQSALNEHSLSPASAMGEKKSPQLLNSRVYPLNLFDASDIDPGK.

Topologically, residues 1 to 24 are extracellular; it reads MSQTLLDNLNKKELTETSCTIEIQ. Residues 25 to 45 form a helical membrane-spanning segment; it reads AAFILSSLATFFGGLIVLFIF. Topologically, residues 46–101 are cytoplasmic; it reads RIALKISRNWKTVKGPRGILELFSSRRIEVNPLRKLYFHGVFRERIEMLLSAQTIV. The helical transmembrane segment at 102–122 threads the bilayer; sequence GQVLVILVFVLSIGSLVIYFI. Over 123–137 the chain is Extracellular; that stretch reads NSMDPVRKCSSYEDK. Residues 138–158 form a helical membrane-spanning segment; that stretch reads IVHVDLSFNAFFSFYFGLRFW. Residues 159–165 are Cytoplasmic-facing; sequence AAEDKIK. Residues 166–186 traverse the membrane as a helical segment; sequence FWLEMNSIVDIFTIPPTFISY. Topologically, residues 187-188 are extracellular; the sequence is YL. A helical; Voltage-sensor membrane pass occupies residues 189–209; that stretch reads KSNWLGLRFLRALRLLELPKI. Residues 210-226 are Cytoplasmic-facing; that stretch reads LQILQVIKTSNSVKLSK. A helical membrane pass occupies residues 227-247; it reads LMSIVISTWFTAAGFLHLVEN. Over 248–259 the chain is Extracellular; that stretch reads SGDPWLNGRNSQ. The segment at residues 260–282 is an intramembrane region (pore-forming); the sequence is TMSYFESIYLVTATMSTVGFGDV. Residues 283–290 lie on the Extracellular side of the membrane; it reads VAKTSLGR. The helical transmembrane segment at 291–311 threads the bilayer; the sequence is IFIVFFTLGSLILFANYIPEM. The Cytoplasmic segment spans residues 312 to 1113; it reads VELFSTRKKY…FDASDIDPGK (802 aa). RCK N-terminal domains lie at 331–473 and 710–881; these read KKFI…DNII and QNHI…DEAI. A compositionally biased stretch (polar residues) spans 1047 to 1081; it reads ASIQDQDTTTNVTSMSQGSNFQGAQSALNEHSLSP. Positions 1047 to 1091 are disordered; the sequence is ASIQDQDTTTNVTSMSQGSNFQGAQSALNEHSLSPASAMGEKKSP.

It belongs to the potassium channel family. Calcium-activated (TC 1.A.1.3) subfamily. KCa1.1/KCNMA1 sub-subfamily. As to quaternary structure, homotetramer; which constitutes the activated potassium channel. Interacts with LRRC52; this interaction changes channel gating properties, such as shifting gating to more negative potentials at a given pH.

The protein resides in the cell membrane. Its subcellular location is the cell projection. The protein localises to the cilium. It localises to the flagellum membrane. It carries out the reaction K(+)(in) = K(+)(out). Its activity is regulated as follows. Regulated by changes in cytosolic pH; activated by alkalization. Not activated by intracellular Ca(2+). VU0546110 acts as a selective inhibitor. The auxiliary subunit LRRC52 shifts the activation of KCNU1 to more negative potentials at a given pH. Testis-specific potassium channel activated by both intracellular pH and membrane voltage that mediates export of K(+). Represents the primary spermatozoan K(+) current. The channel underlies a pH-triggered membrane hyperpolarization during the process of sperm capacitation, as sperm encounter the alkaline environment near the ovum in the female reproductive tract, thereby playing an essential for male fertility. The sequence is that of Potassium channel subfamily U member 1 (Kcnu1) from Rattus norvegicus (Rat).